Consider the following 70-residue polypeptide: Small ribosomal subunit protein bS21 (70 aa).

This sequence belongs to the bacterial ribosomal protein bS21 family.

This chain is Small ribosomal subunit protein bS21, found in Albidiferax ferrireducens (strain ATCC BAA-621 / DSM 15236 / T118) (Rhodoferax ferrireducens).